A 305-amino-acid polypeptide reads, in one-letter code: N-acetylglucosamine-1-phosphotransferase subunit gamma (305 aa).

The signal sequence occupies residues 1 to 24; it reads MAAGLARLLLLLGLSAGGPAPAGA. An MRH domain is found at 69-171; sequence GKCFSLVEST…TFETPLVCHP (103 aa). A disulfide bridge links Cys-71 with Cys-84. N-linked (GlcNAc...) asparagine glycosylation is found at Asn-88 and Asn-115. 2 disulfide bridges follow: Cys-129–Cys-157 and Cys-142–Cys-169. Residues 176-279 enclose the DMAP1-binding domain; the sequence is VYPTLPEALQ…YTRPTETSNL (104 aa). The interval 267-305 is disordered; sequence GIPYTRPTETSNLEHLGHETPRAKSPEQLRGDPGLRGSL. Residues 281 to 296 show a composition bias toward basic and acidic residues; the sequence is HLGHETPRAKSPEQLR.

Homodimer; disulfide-linked. Hexamer of two alpha (GNPTAB), two beta (GNPTAB) and two gamma (GNPTG) subunits; disulfide-linked. The alpha and/or the beta subunits of the enzyme constitute the catalytic subunits. Post-translationally, cys-245 mediates the formation of the interchain disulfide bond for formation of the homodimer. Cys-142, Cys-157 and Cys-169 are involved in intramolecular disulfide bonds formation. Widely expressed.

The protein localises to the secreted. It is found in the golgi apparatus. Non-catalytic subunit of the N-acetylglucosamine-1-phosphotransferase complex, an enzyme that catalyzes the formation of mannose 6-phosphate (M6P) markers on high mannose type oligosaccharides in the Golgi apparatus. Binds and presents the high mannose glycans of the acceptor to the catalytic alpha and beta subunits (GNPTAB). Enhances the rate of N-acetylglucosamine-1-phosphate transfer to the oligosaccharides of acid hydrolase acceptors. The sequence is that of N-acetylglucosamine-1-phosphotransferase subunit gamma (GNPTG) from Homo sapiens (Human).